The sequence spans 332 residues: MTGVFDSLVADMHSTQITASSTYHQHQQPPSGAGAGPGGNSNSSSSNSSLHKPQESPTLPVSTATDSSYYTNQQHPAGGGGGGASPYAHMGSYQYHASGLNNVSYSAKSSYDLGYTAAYTSYAPYGTSSSPVNNEPDKEDLEPEIRIVNGKPKKVRKPRTIYSSFQLAALQRRFQKTQYLALPERAELAASLGLTQTQVKIWFQNRRSKFKKMWKSGEIPTEQHPGASASPPCASPPVSAPASWDFGAPQRMAGGGPGSGGGGAGSSGSSPSSAASAFLGNYPWYHQASGSASHLQATAPLLHPSQTPQAHHHHHHHHHAGGGAPVSAGTIF.

Over residues 19–28 the composition is skewed to polar residues; that stretch reads ASSTYHQHQQ. A disordered region spans residues 19–83; that stretch reads ASSTYHQHQQ…QHPAGGGGGG (65 aa). The segment covering 40-49 has biased composition (low complexity); that stretch reads NSNSSSSNSS. A compositionally biased stretch (polar residues) spans 55 to 75; sequence ESPTLPVSTATDSSYYTNQQH. Positions 155-214 form a DNA-binding region, homeobox; that stretch reads VRKPRTIYSSFQLAALQRRFQKTQYLALPERAELAASLGLTQTQVKIWFQNRRSKFKKMW. 2 disordered regions span residues 219–272 and 304–332; these read IPTE…SSPS and PSQT…GTIF. S235 carries the post-translational modification Phosphoserine. Positions 253-266 are enriched in gly residues; that stretch reads AGGGPGSGGGGAGS. Residues 310–320 are compositionally biased toward basic residues; the sequence is AHHHHHHHHHA.

The protein belongs to the distal-less homeobox family. In terms of assembly, interacts (via homeobox DNA-binding domain) with POU4F2; this interaction enhances retinal ganglion cell (RGC) differentiation. Phosphorylated by serine/threonine kinases. As to expression, expressed only in neural and other ectodermal structures of the head: the brain, the vomeronasal organ, and the preameloblasts of the teeth. Primarily expressed in the germinal cells of the ventral forebrain in the midgestational embryo, and in both dorsal and ventral ventricular zones in late embryogenesis and early postnatal life. Expressed in the inner nuclear layer of the retina.

The protein localises to the nucleus. Its function is as follows. Acts as a transcriptional activator. Activates transcription of CGA/alpha-GSU, via binding to the downstream activin regulatory element (DARE) in the gene promoter. Plays a role in terminal differentiation of interneurons, such as amacrine and bipolar cells in the developing retina. Likely to play a regulatory role in the development of the ventral forebrain. May play a role in craniofacial patterning and morphogenesis. This Mus musculus (Mouse) protein is Homeobox protein DLX-2 (Dlx2).